A 422-amino-acid polypeptide reads, in one-letter code: Probable cell wall mannoprotein PIR32 (422 aa).

The N-terminal stretch at 1–21 (MIHYLIFPILLIFFQIIKSSG) is a signal peptide. Disordered stretches follow at residues 116–143 (DGQVQKMKHKHDYSSGGGDDDDDDEDCF) and 155–313 (DYQD…EGYE). A compositionally biased stretch (acidic residues) spans 133–143 (GDDDDDDEDCF). Positions 158–169 (DMNTQEQANEDS) are enriched in polar residues. Residues 179-214 (HQQVVDQNQQINEEEEETQEQQMQEENNNTNEIEDN) are a coiled coil. Composition is skewed to low complexity over residues 180–189 (QQVVDQNQQI) and 198–209 (EQQMQEENNNTN). N-linked (GlcNAc...) asparagine glycosylation occurs at N206. Over residues 220–231 (ETIEEIYDDIDN) the composition is skewed to acidic residues. Residues N232 and N237 are each glycosylated (N-linked (GlcNAc...) asparagine). Basic residues predominate over residues 238–248 (NSKKYHKKRPH). Composition is skewed to basic and acidic residues over residues 249–284 (NNYENKHGHKDYHEDHHHNHRYKDHENGHEEDDHKW) and 300–311 (QEQKPKHEKSEG). An N-linked (GlcNAc...) asparagine glycan is attached at N328.

This sequence belongs to the PIR protein family. Post-translationally, O-glycosylated. Extensively O-mannosylated.

The protein resides in the secreted. The protein localises to the cell wall. In terms of biological role, probable structural component of the cell wall involved in cell wall integrity and virulence. The sequence is that of Probable cell wall mannoprotein PIR32 (PIR32) from Candida albicans (strain SC5314 / ATCC MYA-2876) (Yeast).